Consider the following 224-residue polypeptide: Putative O-methyltransferase MUL_4520 (224 aa).

The segment covering 1–11 (MHGTDSSSDTP) has biased composition (polar residues). Residues 1-20 (MHGTDSSSDTPGQPAPSRAE) are disordered. S-adenosyl-L-methionine-binding positions include Val51, Glu73, 75 to 76 (GT), Ser81, Asp99, and Ile100. Substrate is bound at residue Asp147. Asp149 contributes to the S-adenosyl-L-methionine binding site.

It belongs to the class I-like SAM-binding methyltransferase superfamily. Cation-dependent O-methyltransferase family.

The chain is Putative O-methyltransferase MUL_4520 from Mycobacterium ulcerans (strain Agy99).